The sequence spans 376 residues: Succinyl-diaminopimelate desuccinylase (376 aa).

H67 serves as a coordination point for Zn(2+). Residue D69 is part of the active site. Residue D100 participates in Zn(2+) binding. E134 acts as the Proton acceptor in catalysis. Zn(2+) contacts are provided by E135, E163, and H349.

The protein belongs to the peptidase M20A family. DapE subfamily. As to quaternary structure, homodimer. It depends on Zn(2+) as a cofactor. Requires Co(2+) as cofactor.

It catalyses the reaction N-succinyl-(2S,6S)-2,6-diaminopimelate + H2O = (2S,6S)-2,6-diaminopimelate + succinate. Its pathway is amino-acid biosynthesis; L-lysine biosynthesis via DAP pathway; LL-2,6-diaminopimelate from (S)-tetrahydrodipicolinate (succinylase route): step 3/3. Its function is as follows. Catalyzes the hydrolysis of N-succinyl-L,L-diaminopimelic acid (SDAP), forming succinate and LL-2,6-diaminopimelate (DAP), an intermediate involved in the bacterial biosynthesis of lysine and meso-diaminopimelic acid, an essential component of bacterial cell walls. This chain is Succinyl-diaminopimelate desuccinylase, found in Xanthomonas campestris pv. campestris (strain 8004).